Reading from the N-terminus, the 188-residue chain is Diphosphoinositol polyphosphate phosphohydrolase DDP1 (188 aa).

Residues 1–21 (MGKTADNHGPVRSETAREGRE) are compositionally biased toward basic and acidic residues. Positions 1-23 (MGKTADNHGPVRSETAREGRENQ) are disordered. In terms of domain architecture, Nudix hydrolase spans 30–179 (GARLVAGCIC…KRPELLEALN (150 aa)). Arginine 32, serine 52, serine 53, and lysine 63 together coordinate 1D-myo-inositol hexakisphosphate. Residues arginine 32, serine 52, serine 53, and lysine 63 each coordinate 5-diphospho-1D-myo-inositol 1,2,3,4,6-pentakisphosphate. P(1),P(5)-bis(5'-adenosyl) pentaphosphate is bound by residues arginine 32, serine 52, serine 53, and lysine 63. Lysine 63, glutamate 80, and glutamate 84 together coordinate Mg(2+). The short motif at 65–86 (GVEKDEPNYETTAQRETWEEAG) is the Nudix box element. Position 100 (aspartate 100) interacts with P(1),P(5)-bis(5'-adenosyl) pentaphosphate. Residues arginine 102, arginine 129, arginine 152, and arginine 171 each coordinate 1D-myo-inositol hexakisphosphate. Arginine 102 serves as a coordination point for 5-diphospho-1D-myo-inositol 1,2,3,4,6-pentakisphosphate. Residues arginine 152 and arginine 171 each contribute to the 5-diphospho-1D-myo-inositol 1,2,3,4,6-pentakisphosphate site. The P(1),P(5)-bis(5'-adenosyl) pentaphosphate site is built by arginine 152, arginine 171, and glutamate 173.

Belongs to the Nudix hydrolase family. DIPP subfamily. It depends on Mg(2+) as a cofactor. Requires Mn(2+) as cofactor. Zn(2+) is required as a cofactor.

The protein localises to the cytoplasm. It localises to the nucleus. The enzyme catalyses diphospho-myo-inositol polyphosphate + H2O = myo-inositol polyphosphate + phosphate.. It carries out the reaction P(1),P(6)-bis(5'-adenosyl) hexaphosphate + H2O = adenosine 5'-pentaphosphate + AMP + 2 H(+). The catalysed reaction is P(1),P(5)-bis(5'-adenosyl) pentaphosphate + H2O = adenosine 5'-tetraphosphate + AMP + 2 H(+). It catalyses the reaction [phosphate](n+1) + n H2O = (n+1) phosphate + n H(+). May eliminate potentially toxic dinucleoside polyphosphates during sporulation. Most active against diadenosine 5',5'''-P1,P6-hexaphosphate (Ap6A). Can also hydrolyze diadenosine 5',5'''-P1,P5-pentaphosphate (Ap5A), adenosine 5'-pentaphosphate (p5A), and adenosine 5'-tetraphosphate (p4A) are also substrates, but not diadenosine 5',5'''-P1,P4-tetraphosphate (Ap4A) or other dinucleotides, mononucleotides, nucleotide sugars, or nucleotide alcohols. Also cleaves a beta-phosphate from the diphosphate groups in PP-InsP5 (diphosphoinositol pentakisphosphate) and [PP]2-InsP4 (bisdiphosphoinositol tetrakisphosphate). Also has endopolyphosphatase activity. In Saccharomyces cerevisiae (strain ATCC 204508 / S288c) (Baker's yeast), this protein is Diphosphoinositol polyphosphate phosphohydrolase DDP1 (DDP1).